Consider the following 542-residue polypeptide: Probable folate-biopterin transporter 8, chloroplastic (542 aa).

A chloroplast-targeting transit peptide spans 1–78 (MERIMINPLL…GVSEFEETAR (78 aa)). The tract at residues 24-45 (LSSIHRQQQQQERQSNNNTLFM) is disordered. Transmembrane regions (helical) follow at residues 103–123 (FPWL…PSTL), 132–152 (LPMV…IGSG), 155–175 (VPYI…MGIF), 181–201 (VLPS…ITEV), 223–243 (ALMA…YLLL), 246–266 (PPKI…VVSL), 308–328 (LIWA…VFCY), 338–358 (SVIG…TVVY), 369–389 (PLIH…YILV), 404–424 (VLCF…PFAV), 446–466 (LCLS…LIGI), and 477–497 (GILI…LVPM). The disordered stretch occupies residues 506–542 (GKRGISKRSRRNRRVGRVVDKESVTYRRERESEEAQR). A compositionally biased stretch (basic residues) spans 509 to 521 (GISKRSRRNRRVG). The span at 522–542 (RVVDKESVTYRRERESEEAQR) shows a compositional bias: basic and acidic residues.

The protein belongs to the major facilitator superfamily. Folate-biopterin transporter (TC 2.A.71) family.

Its subcellular location is the plastid. It is found in the chloroplast membrane. Functionally, could mediate folate transport. The protein is Probable folate-biopterin transporter 8, chloroplastic of Arabidopsis thaliana (Mouse-ear cress).